Here is a 242-residue protein sequence, read N- to C-terminus: Methylthioribulose-1-phosphate dehydratase (242 aa).

The interval methionine 1–histidine 23 is disordered. Substrate is bound at residue cysteine 102. 2 residues coordinate Zn(2+): histidine 119 and histidine 121. Glutamate 148 functions as the Proton donor/acceptor in the catalytic mechanism. Histidine 204 contacts Zn(2+).

It belongs to the aldolase class II family. MtnB subfamily. The cofactor is Zn(2+).

The protein localises to the cytoplasm. The catalysed reaction is 5-(methylsulfanyl)-D-ribulose 1-phosphate = 5-methylsulfanyl-2,3-dioxopentyl phosphate + H2O. The protein operates within amino-acid biosynthesis; L-methionine biosynthesis via salvage pathway; L-methionine from S-methyl-5-thio-alpha-D-ribose 1-phosphate: step 2/6. Catalyzes the dehydration of methylthioribulose-1-phosphate (MTRu-1-P) into 2,3-diketo-5-methylthiopentyl-1-phosphate (DK-MTP-1-P). The chain is Methylthioribulose-1-phosphate dehydratase from Uncinocarpus reesii (strain UAMH 1704).